We begin with the raw amino-acid sequence, 342 residues long: uncharacterized protein (342 aa).

It belongs to the cycloisomerase 2 family.

This is an uncharacterized protein from Staphylococcus epidermidis (strain ATCC 12228 / FDA PCI 1200).